Consider the following 284-residue polypeptide: MTAQIIDGKALAEELRQGFKARVEALTAKGHKPGLVVILVGADPASEVYVRNKVNGCLAIGMHSEKITYDATIDQATVLNKIAELNADPNIHGILVQLPLPKHFDEEAVLEAISAEKDVDGFHAENVGALAQGNPRFIPCTPYGVMKMFEKGNVDLTGKEAVVIGRSNIVGKPMALLLINAGATVTVCNSRTKDLKFHTSRADILVAAVGKPKFVTGDMVKPGAVVIDVGINRLPDGKLCGDVDFASCLEVAGQITPVPGGVGPMTITMLLANTIEAAERKAGL.

Residues 165 to 167, S190, and I231 contribute to the NADP(+) site; that span reads GRS.

Belongs to the tetrahydrofolate dehydrogenase/cyclohydrolase family. In terms of assembly, homodimer.

The enzyme catalyses (6R)-5,10-methylene-5,6,7,8-tetrahydrofolate + NADP(+) = (6R)-5,10-methenyltetrahydrofolate + NADPH. The catalysed reaction is (6R)-5,10-methenyltetrahydrofolate + H2O = (6R)-10-formyltetrahydrofolate + H(+). Its pathway is one-carbon metabolism; tetrahydrofolate interconversion. Catalyzes the oxidation of 5,10-methylenetetrahydrofolate to 5,10-methenyltetrahydrofolate and then the hydrolysis of 5,10-methenyltetrahydrofolate to 10-formyltetrahydrofolate. The chain is Bifunctional protein FolD from Dechloromonas aromatica (strain RCB).